Here is a 476-residue protein sequence, read N- to C-terminus: Aspartyl/glutamyl-tRNA(Asn/Gln) amidotransferase subunit B (476 aa).

This sequence belongs to the GatB/GatE family. GatB subfamily. As to quaternary structure, heterotrimer of A, B and C subunits.

The catalysed reaction is L-glutamyl-tRNA(Gln) + L-glutamine + ATP + H2O = L-glutaminyl-tRNA(Gln) + L-glutamate + ADP + phosphate + H(+). It carries out the reaction L-aspartyl-tRNA(Asn) + L-glutamine + ATP + H2O = L-asparaginyl-tRNA(Asn) + L-glutamate + ADP + phosphate + 2 H(+). Allows the formation of correctly charged Asn-tRNA(Asn) or Gln-tRNA(Gln) through the transamidation of misacylated Asp-tRNA(Asn) or Glu-tRNA(Gln) in organisms which lack either or both of asparaginyl-tRNA or glutaminyl-tRNA synthetases. The reaction takes place in the presence of glutamine and ATP through an activated phospho-Asp-tRNA(Asn) or phospho-Glu-tRNA(Gln). This chain is Aspartyl/glutamyl-tRNA(Asn/Gln) amidotransferase subunit B, found in Neisseria meningitidis serogroup A / serotype 4A (strain DSM 15465 / Z2491).